A 204-amino-acid polypeptide reads, in one-letter code: MDFNQYFLPLFQGEASLIINKKVEEFKLFDRKNKDALFEELCFCILAANTSARMALDMQNRIGKGFLYLSENELREKLKAFKYRFYNVRPRYIVESRDIVDELPYIVSMDNKEEARDLLVENVYGFGYKEASHFLRNVGVFDFAILDKHILEWLSRYFQVKKNTSRKNYLYNESIFREIAKSVGMEPGVLDLYIWYMETGTVIK.

Active-site residues include lysine 129 and aspartate 147.

Belongs to the type-2 OGG1 family.

It catalyses the reaction 2'-deoxyribonucleotide-(2'-deoxyribose 5'-phosphate)-2'-deoxyribonucleotide-DNA = a 3'-end 2'-deoxyribonucleotide-(2,3-dehydro-2,3-deoxyribose 5'-phosphate)-DNA + a 5'-end 5'-phospho-2'-deoxyribonucleoside-DNA + H(+). Its function is as follows. Catalyzes the excision of an oxidatively damaged form of guanine (7,8-dihydro-8-oxoguanine = 8-oxoG) from DNA. Also cleaves the DNA backbone at apurinic/apyrimidinic sites (AP sites). Prefers oligomers containing 8-oxoG:C, 8-oxoG:T and 8-oxoG:G base pairs, and is less effective on oligomers containing 8-oxoG:A mispairs. This Thermoplasma volcanium (strain ATCC 51530 / DSM 4299 / JCM 9571 / NBRC 15438 / GSS1) protein is 8-oxoguanine DNA glycosylase/AP lyase.